The chain runs to 463 residues: NF-kappa-B-activating protein (463 aa).

The segment covering 1-14 (MRSRSRSRSRQRER) has biased composition (basic residues). Residues 1–358 (MRSRSRSRSR…GGSLNQKDFG (358 aa)) form a disordered region. Composition is skewed to basic and acidic residues over residues 15 to 29 (RRSD…ERRT) and 39 to 71 (VSRE…DAVP). Low complexity predominate over residues 78–98 (SSPSRSSSSSSSDRSSSSRSP). The span at 107-125 (KSVERWPNDRYHENNDRRQ) shows a compositional bias: basic and acidic residues. Residues Ser-136, Ser-189, and Ser-191 each carry the phosphoserine modification. Position 195 is a phosphothreonine (Thr-195). Residues 208-238 (PKKKKKKGKRKHKKSEKKSKKKSKKSKKKKS) are compositionally biased toward basic residues. The segment covering 241–267 (ESSSSSSSSSSEDSSDESSSSSSSSSS) has biased composition (low complexity). Over residues 268–278 (DSEDESEEEDV) the composition is skewed to acidic residues. Positions 279–288 (WLEKTADGIK) are enriched in basic and acidic residues. The span at 289–312 (KPKKKKSSTSKKDKKSKKKKKKRK) shows a compositional bias: basic residues. The span at 330-340 (KNKESASHNDE) shows a compositional bias: basic and acidic residues.

It belongs to the NKAP family.

It is found in the nucleus. In terms of biological role, tumor suppressor involved in maintaining genome integrity. Influences gene expression and mRNA splicing. The protein is NF-kappa-B-activating protein of Drosophila melanogaster (Fruit fly).